The following is a 448-amino-acid chain: Glutamyl-tRNA(Gln) amidotransferase subunit D (448 aa).

The Asparaginase/glutaminase domain occupies serine 92–asparagine 423. Catalysis depends on residues threonine 102, threonine 178, aspartate 179, and lysine 257.

It belongs to the asparaginase 1 family. GatD subfamily. As to quaternary structure, heterodimer of GatD and GatE.

It catalyses the reaction L-glutamyl-tRNA(Gln) + L-glutamine + ATP + H2O = L-glutaminyl-tRNA(Gln) + L-glutamate + ADP + phosphate + H(+). Its function is as follows. Allows the formation of correctly charged Gln-tRNA(Gln) through the transamidation of misacylated Glu-tRNA(Gln) in organisms which lack glutaminyl-tRNA synthetase. The reaction takes place in the presence of glutamine and ATP through an activated gamma-phospho-Glu-tRNA(Gln). The GatDE system is specific for glutamate and does not act on aspartate. The chain is Glutamyl-tRNA(Gln) amidotransferase subunit D from Sulfurisphaera tokodaii (strain DSM 16993 / JCM 10545 / NBRC 100140 / 7) (Sulfolobus tokodaii).